The primary structure comprises 330 residues: Polygalacturonase inhibitor 1 (330 aa).

A signal peptide spans 1–21; it reads MDKTATLCLLFLFTFLTTCLS. Intrachain disulfides connect C25-C55 and C56-C63. 10 LRR repeats span residues 69–93, 94–117, 118–142, 143–166, 167–189, 191–215, 217–237, 238–260, 261–285, and 287–309; these read NHRV…VGDL, PYLE…TIAK, LKNL…ISQL, KNLE…LSTL, PKIL…SFGS, PGTV…LGNI, FNRI…LFGS, NKTT…KVDI, PKTL…WTEA, and LQFF…KLQT. Residues N106 and N130 are each glycosylated (N-linked (GlcNAc...) asparagine). N-linked (GlcNAc...) asparagine glycosylation is present at N238. Residue N291 is glycosylated (N-linked (GlcNAc...) asparagine). Disulfide bonds link C298–C320 and C322–C329.

It belongs to the polygalacturonase-inhibiting protein family.

Its subcellular location is the secreted. The protein resides in the cell wall. It localises to the membrane. Functionally, inhibitor of fungal polygalacturonase. It is an important factor for plant resistance to phytopathogenic fungi. This is Polygalacturonase inhibitor 1 (PGIP1) from Arabidopsis thaliana (Mouse-ear cress).